A 1140-amino-acid polypeptide reads, in one-letter code: GPI inositol-deacylase (1140 aa).

The tract at residues M1–R84 is disordered. Residues G55–A78 are compositionally biased toward polar residues. N63 carries N-linked (GlcNAc...) asparagine glycosylation. A helical membrane pass occupies residues S117–V137. S304 is an active-site residue. A helical transmembrane segment spans residues L782 to L802. N862 carries N-linked (GlcNAc...) asparagine glycosylation. Helical transmembrane passes span A882–L902, V905–G925, V952–I972, S1002–A1022, V1039–P1059, S1070–I1090, and L1094–L1114.

Belongs to the GPI inositol-deacylase family.

The protein localises to the endoplasmic reticulum membrane. Involved in inositol deacylation of GPI-anchored proteins which plays important roles in the quality control and ER-associated degradation of GPI-anchored proteins. This is GPI inositol-deacylase (bst1) from Emericella nidulans (strain FGSC A4 / ATCC 38163 / CBS 112.46 / NRRL 194 / M139) (Aspergillus nidulans).